A 118-amino-acid chain; its full sequence is Protein MT2260 (118 aa).

This sequence belongs to the HesB/IscA family.

The chain is Protein MT2260 from Mycobacterium tuberculosis (strain CDC 1551 / Oshkosh).